The sequence spans 730 residues: Polyphosphate kinase (730 aa).

Over residues 1 to 21 the composition is skewed to basic and acidic residues; it reads MMRHDRNVTEIDAETRPDENL. The tract at residues 1–39 is disordered; sequence MMRHDRNVTEIDAETRPDENLWHSGDSAVGAPPAATPAA. An ATP-binding site is contributed by Asn86. The Mg(2+) site is built by Arg423 and Arg453. His483 acts as the Phosphohistidine intermediate in catalysis. Residues Tyr516, Arg612, and His640 each contribute to the ATP site.

Belongs to the polyphosphate kinase 1 (PPK1) family. Requires Mg(2+) as cofactor. An intermediate of this reaction is the autophosphorylated ppk in which a phosphate is covalently linked to a histidine residue through a N-P bond.

The catalysed reaction is [phosphate](n) + ATP = [phosphate](n+1) + ADP. In terms of biological role, catalyzes the reversible transfer of the terminal phosphate of ATP to form a long-chain polyphosphate (polyP). The chain is Polyphosphate kinase from Mycobacterium avium (strain 104).